We begin with the raw amino-acid sequence, 957 residues long: Glycine dehydrogenase (decarboxylating) (957 aa).

N6-(pyridoxal phosphate)lysine is present on Lys708.

The protein belongs to the GcvP family. In terms of assembly, the glycine cleavage system is composed of four proteins: P, T, L and H. The cofactor is pyridoxal 5'-phosphate.

It catalyses the reaction N(6)-[(R)-lipoyl]-L-lysyl-[glycine-cleavage complex H protein] + glycine + H(+) = N(6)-[(R)-S(8)-aminomethyldihydrolipoyl]-L-lysyl-[glycine-cleavage complex H protein] + CO2. Functionally, the glycine cleavage system catalyzes the degradation of glycine. The P protein binds the alpha-amino group of glycine through its pyridoxal phosphate cofactor; CO(2) is released and the remaining methylamine moiety is then transferred to the lipoamide cofactor of the H protein. The protein is Glycine dehydrogenase (decarboxylating) of Salmonella paratyphi B (strain ATCC BAA-1250 / SPB7).